Here is a 255-residue protein sequence, read N- to C-terminus: NAD-dependent protein deacylase (255 aa).

One can recognise a Deacetylase sirtuin-type domain in the interval 1-253; the sequence is MEFSDELLAS…PLLLQALRRS (253 aa). 22-42 contributes to the NAD(+) binding site; the sequence is GAGVSAESGIPTFRDALTGFW. 2 residues coordinate substrate: Tyr-67 and Arg-70. Residue 101-104 coordinates NAD(+); the sequence is QNVD. His-119 serves as the catalytic Proton acceptor. Residues Cys-127, Cys-130, Cys-155, and Cys-158 each contribute to the Zn(2+) site. NAD(+) contacts are provided by residues 195 to 197, 221 to 223, and Ala-239; these read GTS and NPA.

It belongs to the sirtuin family. Class III subfamily. The cofactor is Zn(2+).

Its subcellular location is the cytoplasm. The enzyme catalyses N(6)-acetyl-L-lysyl-[protein] + NAD(+) + H2O = 2''-O-acetyl-ADP-D-ribose + nicotinamide + L-lysyl-[protein]. It catalyses the reaction N(6)-succinyl-L-lysyl-[protein] + NAD(+) + H2O = 2''-O-succinyl-ADP-D-ribose + nicotinamide + L-lysyl-[protein]. Functionally, NAD-dependent lysine deacetylase and desuccinylase that specifically removes acetyl and succinyl groups on target proteins. Modulates the activities of several proteins which are inactive in their acylated form. This chain is NAD-dependent protein deacylase, found in Methylococcus capsulatus (strain ATCC 33009 / NCIMB 11132 / Bath).